Here is a 169-residue protein sequence, read N- to C-terminus: UPF0303 protein BCAN_A1444 (169 aa).

It belongs to the UPF0303 family.

The chain is UPF0303 protein BCAN_A1444 from Brucella canis (strain ATCC 23365 / NCTC 10854 / RM-666).